The sequence spans 175 residues: Co-chaperone protein HscB homolog (175 aa).

The 73-residue stretch at 7–79 (SHFDLFDLPA…LKRATYLLHL (73 aa)) folds into the J domain.

Belongs to the HscB family. Interacts with HscA and stimulates its ATPase activity.

Co-chaperone involved in the maturation of iron-sulfur cluster-containing proteins. Seems to help targeting proteins to be folded toward HscA. The chain is Co-chaperone protein HscB homolog from Paraburkholderia phytofirmans (strain DSM 17436 / LMG 22146 / PsJN) (Burkholderia phytofirmans).